We begin with the raw amino-acid sequence, 132 residues long: Agouti-signaling protein (132 aa).

A signal peptide spans 1–22; the sequence is MDVTRLLLATLLVFLCFFTACS. Asn-39 is a glycosylation site (N-linked (GlcNAc...) asparagine). The segment at 61–87 is disordered; sequence QISRKEAEKKRSSKKEASMKKVARPRT. Basic and acidic residues predominate over residues 63 to 79; it reads SRKEAEKKRSSKKEASM. 5 disulfides stabilise this stretch: Cys-93/Cys-108, Cys-100/Cys-114, Cys-107/Cys-125, Cys-111/Cys-132, and Cys-116/Cys-123. Residues 93 to 132 form the Agouti domain; sequence CVATRDSCKPPAPACCDPCASCQCRFFRSACSCRVLSLNC.

It localises to the secreted. Involved in the regulation of melanogenesis. The binding of ASP to MC1R precludes alpha-MSH initiated signaling and thus blocks production of cAMP, leading to a down-regulation of eumelanogenesis (brown/black pigment) and thus increasing synthesis of pheomelanin (yellow/red pigment). The sequence is that of Agouti-signaling protein (ASIP) from Macaca nigrescens (Gorontalo macaque).